Here is a 162-residue protein sequence, read N- to C-terminus: MSVVNRRIAVYPGTFDPITNGHIDLVSRAAPLFESIVVGVAQSPSKGPSLPLQQRVALAREALCQHENVQVIGFDTLLAHFVRHVGAGVLLRGLRAVSDFEYEFQMASMNRHLIPEVETLFLTPAEQHSFISSSLVREIARLGGDVSGFAPAAVVAALRQNL.

T14 lines the substrate pocket. ATP-binding positions include 14–15 (TF) and H22. 3 residues coordinate substrate: K46, L78, and R92. Residues 93-95 (GLR), E103, and 128-134 (HSFISSS) each bind ATP.

The protein belongs to the bacterial CoaD family. In terms of assembly, homohexamer. Requires Mg(2+) as cofactor.

It localises to the cytoplasm. It carries out the reaction (R)-4'-phosphopantetheine + ATP + H(+) = 3'-dephospho-CoA + diphosphate. It functions in the pathway cofactor biosynthesis; coenzyme A biosynthesis; CoA from (R)-pantothenate: step 4/5. In terms of biological role, reversibly transfers an adenylyl group from ATP to 4'-phosphopantetheine, yielding dephospho-CoA (dPCoA) and pyrophosphate. The polypeptide is Phosphopantetheine adenylyltransferase (Xylella fastidiosa (strain 9a5c)).